The primary structure comprises 524 residues: Protein hunchback (524 aa).

Disordered regions lie at residues isoleucine 42–glutamine 86 and tyrosine 101–serine 187. Residues serine 59–aspartate 75 are compositionally biased toward low complexity. The span at leucine 76 to glutamine 86 shows a compositional bias: polar residues. 3 stretches are compositionally biased toward basic and acidic residues: residues lysine 118–glutamate 127, arginine 138–leucine 154, and threonine 164–asparagine 178. C2H2-type zinc fingers lie at residues phenylalanine 202–histidine 224, leucine 231–histidine 253, phenylalanine 259–histidine 281, and tyrosine 298–histidine 311. Residues aspartate 402–threonine 442 form a disordered region. C2H2-type zinc fingers lie at residues asparagine 471–histidine 493 and phenylalanine 499–histidine 523.

The protein belongs to the hunchback C2H2-type zinc-finger protein family.

The protein resides in the nucleus. Functionally, gap class segmentation protein that controls development of head structures. The chain is Protein hunchback (hb) from Tribolium castaneum (Red flour beetle).